A 184-amino-acid chain; its full sequence is ATP synthase subunit b, chloroplastic (184 aa).

The chain crosses the membrane as a helical span at residues 27–49 (LATNPINLSVVLGVLIFFGKGVL).

It belongs to the ATPase B chain family. F-type ATPases have 2 components, F(1) - the catalytic core - and F(0) - the membrane proton channel. F(1) has five subunits: alpha(3), beta(3), gamma(1), delta(1), epsilon(1). F(0) has four main subunits: a(1), b(1), b'(1) and c(10-14). The alpha and beta chains form an alternating ring which encloses part of the gamma chain. F(1) is attached to F(0) by a central stalk formed by the gamma and epsilon chains, while a peripheral stalk is formed by the delta, b and b' chains.

The protein localises to the plastid. The protein resides in the chloroplast thylakoid membrane. F(1)F(0) ATP synthase produces ATP from ADP in the presence of a proton or sodium gradient. F-type ATPases consist of two structural domains, F(1) containing the extramembraneous catalytic core and F(0) containing the membrane proton channel, linked together by a central stalk and a peripheral stalk. During catalysis, ATP synthesis in the catalytic domain of F(1) is coupled via a rotary mechanism of the central stalk subunits to proton translocation. Functionally, component of the F(0) channel, it forms part of the peripheral stalk, linking F(1) to F(0). In Atropa belladonna (Belladonna), this protein is ATP synthase subunit b, chloroplastic.